Here is a 437-residue protein sequence, read N- to C-terminus: Enolase 2 (437 aa).

Residue lysine 60 forms a Glycyl lysine isopeptide (Lys-Gly) (interchain with G-Cter in ubiquitin) linkage. A Phosphoserine modification is found at serine 138. Histidine 160 is a catalytic residue. The residue at position 188 (serine 188) is a Phosphoserine. Lysine 243 is covalently cross-linked (Glycyl lysine isopeptide (Lys-Gly) (interchain with G-Cter in ubiquitin)). The Mg(2+) site is built by aspartate 247 and glutamate 296. At threonine 313 the chain carries Phosphothreonine. Aspartate 321 is a binding site for Mg(2+). The residue at position 324 (threonine 324) is a Phosphothreonine. Lysine 358 is covalently cross-linked (Glycyl lysine isopeptide (Lys-Gly) (interchain with G-Cter in ubiquitin)).

Belongs to the enolase family. In terms of assembly, homodimer. Mg(2+) is required as a cofactor.

Its subcellular location is the cytoplasm. The enzyme catalyses (2R)-2-phosphoglycerate = phosphoenolpyruvate + H2O. It participates in carbohydrate degradation; glycolysis; pyruvate from D-glyceraldehyde 3-phosphate: step 4/5. The protein is Enolase 2 (ENO2) of Saccharomyces cerevisiae (strain ATCC 204508 / S288c) (Baker's yeast).